The following is a 159-amino-acid chain: Transmembrane protein 88 (159 aa).

The next 2 membrane-spanning stretches (helical) occupy residues 43–63 (LLLLALVLGTILLPAVIMLGF) and 88–108 (FTALLVTGFLLLVPLLVLALA).

This sequence belongs to the TMEM88 family. As to quaternary structure, interacts (via C-terminus) with DVL1.

Its subcellular location is the cell membrane. Functionally, inhibits the Wnt/beta-catenin signaling pathway. Crucial for heart development and acts downstream of GATA factors in the pre-cardiac mesoderm to specify lineage commitment of cardiomyocyte development. This is Transmembrane protein 88 (Tmem88) from Mus musculus (Mouse).